The chain runs to 488 residues: MQTLNRRNFPGRQHPDRVIQFGEGNFLRAFVDWQLDLLNEHTDLDAGIVIVRPIDSDFPPALDTQDGLYTTIIRGLNEQGEAVREPRLIRSVNREINVYRQFDEYLALAHDPNIRFVFSNTTEAGISYHADDRLSDAPPVSFPAKLTRLLYERFCHFDGAADKGWVLLPCELIDYNGVALKELVLRYAAQWELTSTFTAWLNDHNTFCSTLVDRIVTGYPRAEVEALQQEMGYQDTFWDTAEHFYLFVIQGPLWLAEELRLNKLDLNVRIVDDIKPYKERKVAILNGAHTALVPVAFLAGLDTVGESMNDALIGKFVEKTIAEEIVPVLDLPHDELTSFAQAVLSRFRNPFIQHQLLSISLNGMTKFRTRILPQLLTYRERHGELPARLTFALAALIAFYRGERSGEGDALQAYPLQDDAHWLERYSTLWAGVKENTVSLAELVNVVLRDADHWEQDLTQVPGLAAQVTEQLQTIVERGMRAAVEGYC.

Residue 18–29 coordinates NAD(+); sequence VIQFGEGNFLRA.

This sequence belongs to the mannitol dehydrogenase family. UxaB subfamily.

It carries out the reaction D-altronate + NAD(+) = keto-D-tagaturonate + NADH + H(+). It functions in the pathway carbohydrate metabolism; pentose and glucuronate interconversion. This Pectobacterium atrosepticum (strain SCRI 1043 / ATCC BAA-672) (Erwinia carotovora subsp. atroseptica) protein is Altronate oxidoreductase.